Reading from the N-terminus, the 135-residue chain is Large ribosomal subunit protein bL17 (135 aa).

This sequence belongs to the bacterial ribosomal protein bL17 family. In terms of assembly, part of the 50S ribosomal subunit. Contacts protein L32.

The polypeptide is Large ribosomal subunit protein bL17 (Listeria welshimeri serovar 6b (strain ATCC 35897 / DSM 20650 / CCUG 15529 / CIP 8149 / NCTC 11857 / SLCC 5334 / V8)).